The primary structure comprises 1761 residues: Nonribosomal peptide synthetase 6 (1761 aa).

The adenylation stretch occupies residues E63 to R468. The Carrier 1 domain occupies E600 to S675. An O-(pantetheine 4'-phosphoryl)serine modification is found at S636. The interval V712–D1135 is condensation 1. Carrier domains are found at residues S1169–R1242 and S1237–M1313. O-(pantetheine 4'-phosphoryl)serine occurs at positions 1203 and 1274. A condensation 2 region spans residues I1354 to V1677.

Belongs to the NRP synthetase family.

Its pathway is siderophore biosynthesis. Its function is as follows. NRPS involved in extracellular coprogen-type siderophores biosynthesis including coprogen, neocoprogen I and neocoprogen II. The role of extracellular siderophores in fungal virulence to plants is to supply iron to the fungus during plant infection, but not to act as phytotoxins, depriving their hosts of iron. This chain is Nonribosomal peptide synthetase 6, found in Cochliobolus miyabeanus (Brown spot disease fungus).